Here is a 327-residue protein sequence, read N- to C-terminus: tRNA dimethylallyltransferase (327 aa).

Residue 14 to 21 (GPTASGKT) coordinates ATP. 16-21 (TASGKT) contacts substrate. Interaction with substrate tRNA regions lie at residues 39-42 (DSAL) and 163-167 (QRIQR).

It belongs to the IPP transferase family. Monomer. Requires Mg(2+) as cofactor.

It catalyses the reaction adenosine(37) in tRNA + dimethylallyl diphosphate = N(6)-dimethylallyladenosine(37) in tRNA + diphosphate. Functionally, catalyzes the transfer of a dimethylallyl group onto the adenine at position 37 in tRNAs that read codons beginning with uridine, leading to the formation of N6-(dimethylallyl)adenosine (i(6)A). The chain is tRNA dimethylallyltransferase from Xanthomonas oryzae pv. oryzae (strain KACC10331 / KXO85).